The chain runs to 348 residues: Protein RecA (348 aa).

Residue 69–76 (GPESSGKT) coordinates ATP.

Belongs to the RecA family.

The protein localises to the cytoplasm. In terms of biological role, can catalyze the hydrolysis of ATP in the presence of single-stranded DNA, the ATP-dependent uptake of single-stranded DNA by duplex DNA, and the ATP-dependent hybridization of homologous single-stranded DNAs. It interacts with LexA causing its activation and leading to its autocatalytic cleavage. The chain is Protein RecA from Gluconacetobacter polyoxogenes (Acetobacter polyoxogenes).